We begin with the raw amino-acid sequence, 374 residues long: MQECGATAAGRRAFDSICPNRMLDPRGRPISKPGKPERKFAPPRKFFPGSSGCNRVSVYEDPPDAETPALPALTTIDLQDLADCSSFLGSDPPPGGDSAASQSHSLQTAADFDLQDFRDTVDNLIADSSSLMSPSLAGGDLPFSPSDVLPFGPCLSPPLSPPEVPPPEQYWKEVADQNQRALGDALIENNQLHATLTQKQEEIASLKERNLQLKELASRTRHLASVLDKLMITHSRDPGAAAEPFLLKATAKRSLEELFSAAGQDCAEVDAVLREISERCDEALQSRDPKRLRLQPEPQSLDRRPGNLHGAFPGLRTDCSLSTLNLSHSELEEGGSFSTPIRSHSTIRTLAFPQGNAFTIRTANGGYKFRWIPS.

2 disordered regions span residues 18 to 72 (CPNR…ALPA) and 84 to 105 (CSSFLGSDPPPGGDSAASQSHS). Positions 168 to 216 (EQYWKEVADQNQRALGDALIENNQLHATLTQKQEEIASLKERNLQLKEL) form a coiled coil. The tract at residues 284-306 (LQSRDPKRLRLQPEPQSLDRRPG) is disordered.

It belongs to the geminin family. In terms of assembly, heterodimer (via coiled-coil domain) with GMNN (via coiled-coil domain); targets GMNN to the nucleus. Can form homodimers (in vitro, via coiled-coil domain), but these are much less stable than the heterodimer formed with GMNN.

The protein localises to the nucleus. Transcription regulator specifically required for multiciliate cell differentiation. Acts in a multiprotein complex containing E2F4 and E2F5 that binds and activates genes required for centriole biogenesis. Required for the deuterosome-mediated acentriolar pathway. Plays a role in mitotic cell cycle progression by promoting cell cycle exit. Modulates GMNN activity by reducing its affinity for CDT1. The polypeptide is Multicilin (MCIDAS) (Bos taurus (Bovine)).